The primary structure comprises 270 residues: Chymotrypsin-like elastase family member 3B (270 aa).

A signal peptide (or 16) is located at residues 1–15; sequence MMLRLLSSLLLVAVA. Residues 16–28 constitute a propeptide, activation peptide; that stretch reads SGYGPPSSRPSSR. The Peptidase S1 domain occupies 29-268; it reads VVNGEDAVPY…FIDWIEETIA (240 aa). Cys58 and Cys74 are oxidised to a cystine. His73 serves as the catalytic Charge relay system. An N-linked (GlcNAc...) asparagine glycan is attached at Asn114. An intrachain disulfide couples Cys117 to Cys120. Catalysis depends on Asp123, which acts as the Charge relay system. Intrachain disulfides connect Cys157–Cys223, Cys188–Cys204, and Cys213–Cys244. The active-site Charge relay system is Ser217.

This sequence belongs to the peptidase S1 family. Elastase subfamily. In terms of tissue distribution, pancreas. Not detectable in keratinocytes.

The enzyme catalyses Preferential cleavage: Ala-|-Xaa. Does not hydrolyze elastin.. Functionally, efficient protease with alanine specificity but only little elastolytic activity. The chain is Chymotrypsin-like elastase family member 3B (CELA3B) from Homo sapiens (Human).